The primary structure comprises 290 residues: N-acetylmannosamine kinase (290 aa).

ATP-binding positions include 6-13 (ALDIGGTK) and 132-139 (GVGGGIIL). Positions 156, 166, 168, and 173 each coordinate Zn(2+).

It belongs to the ROK (NagC/XylR) family. NanK subfamily. Homodimer.

It carries out the reaction an N-acyl-D-mannosamine + ATP = an N-acyl-D-mannosamine 6-phosphate + ADP + H(+). The protein operates within amino-sugar metabolism; N-acetylneuraminate degradation; D-fructose 6-phosphate from N-acetylneuraminate: step 2/5. In terms of biological role, catalyzes the phosphorylation of N-acetylmannosamine (ManNAc) to ManNAc-6-P. This Yersinia pestis (strain Pestoides F) protein is N-acetylmannosamine kinase.